A 156-amino-acid chain; its full sequence is Ribosomal RNA large subunit methyltransferase H (156 aa).

S-adenosyl-L-methionine is bound by residues Leu73, Gly104, and 123–128; that span reads LGALTL.

It belongs to the RNA methyltransferase RlmH family. Homodimer.

The protein resides in the cytoplasm. The catalysed reaction is pseudouridine(1915) in 23S rRNA + S-adenosyl-L-methionine = N(3)-methylpseudouridine(1915) in 23S rRNA + S-adenosyl-L-homocysteine + H(+). In terms of biological role, specifically methylates the pseudouridine at position 1915 (m3Psi1915) in 23S rRNA. This Dichelobacter nodosus (strain VCS1703A) protein is Ribosomal RNA large subunit methyltransferase H.